Here is a 467-residue protein sequence, read N- to C-terminus: GTPase Der (467 aa).

EngA-type G domains follow at residues 25-188 (PVVA…PEAP) and 199-372 (RRVA…ASWE). GTP-binding positions include 31 to 38 (GRPNVGKS), 78 to 82 (DTGGW), 140 to 143 (NKAD), 205 to 212 (GRPNVGKS), 252 to 256 (DTAGL), and 317 to 320 (NKWD). One can recognise a KH-like domain in the interval 373–455 (TRVPTAQLNA…PIEIAVRPRK (83 aa)).

This sequence belongs to the TRAFAC class TrmE-Era-EngA-EngB-Septin-like GTPase superfamily. EngA (Der) GTPase family. Associates with the 50S ribosomal subunit.

Its function is as follows. GTPase that plays an essential role in the late steps of ribosome biogenesis. The chain is GTPase Der from Salinispora arenicola (strain CNS-205).